Reading from the N-terminus, the 118-residue chain is Na(+)/H(+) antiporter subunit G1 (118 aa).

A run of 3 helical transmembrane segments spans residues 9–29, 47–67, and 69–89; these read LAVI…IGII, LGAI…DGYI, and MQLI…SHLI.

The protein belongs to the CPA3 antiporters (TC 2.A.63) subunit G family. In terms of assembly, may form a heterooligomeric complex that consists of seven subunits: mnhA1, mnhB1, mnhC1, mnhD1, mnhE1, mnhF1 and mnhG1.

The protein resides in the cell membrane. Its function is as follows. Mnh complex is a Na(+)/H(+) antiporter involved in Na(+) excretion. This chain is Na(+)/H(+) antiporter subunit G1 (mnhG1), found in Staphylococcus haemolyticus (strain JCSC1435).